Consider the following 375-residue polypeptide: Beta-1,3-N-acetylglucosaminyltransferase lunatic fringe (375 aa).

Residues 1–8 are Cytoplasmic-facing; it reads MLKNWGKK. A helical; Signal-anchor for type II membrane protein transmembrane segment spans residues 9-29; the sequence is LLLSIVGATLTCLLVLVVDQQ. The Lumenal portion of the chain corresponds to 30–375; that stretch reads SRHMLETQSD…TPWCPWKAAY (346 aa). The disordered stretch occupies residues 53-73; that stretch reads DLDPANPGDGGDPANSAQDSG. Residue Arg-125 participates in substrate binding. N-linked (GlcNAc...) asparagine glycosylation is present at Asn-163. Intrachain disulfides connect Cys-164–Cys-175 and Cys-193–Cys-256. Asp-197 is a binding site for substrate. Asp-198 is a Mn(2+) binding site. Residue Asp-286 is part of the active site. His-310 serves as a coordination point for Mn(2+). Cysteines 360 and 369 form a disulfide.

Belongs to the glycosyltransferase 31 family. It depends on Mn(2+) as a cofactor. Co(2+) serves as cofactor. A soluble form may be derived from the membrane form by proteolytic processing. As to expression, detected in the neural tube, the eye and the otic vesicle, expression coincides with the region that produces the medial, intermediate and lateral neurons.

The protein resides in the golgi apparatus membrane. It carries out the reaction 3-O-(alpha-L-fucosyl)-L-threonyl-[EGF-like domain protein] + UDP-N-acetyl-alpha-D-glucosamine = 3-O-(N-acetyl-beta-D-glucosaminyl-(1-&gt;3)-alpha-L-fucosyl)-L-threonyl-[EGF-like domain protein] + UDP + H(+). The catalysed reaction is 3-O-(alpha-L-fucosyl)-L-seryl-[EGF-like domain protein] + UDP-N-acetyl-alpha-D-glucosamine = 3-O-(N-acetyl-beta-D-glucosaminyl-(1-&gt;3)-alpha-L-fucosyl)-L-seryl-[EGF-like domain protein] + UDP + H(+). Its function is as follows. Glycosyltransferase that initiates the elongation of O-linked fucose residues attached to EGF-like repeats in the extracellular domain of Notch molecules. Essential mediator of somite segmentation and patterning. May be involved in mesoderm development. This is Beta-1,3-N-acetylglucosaminyltransferase lunatic fringe (lfng) from Xenopus laevis (African clawed frog).